Consider the following 228-residue polypeptide: Lipoprotein LpqN (228 aa).

The signal sequence occupies residues 1–19 (MKHFTAAVATVALSLALAG). Cysteine 20 carries the N-palmitoyl cysteine lipid modification. Cysteine 20 is lipidated: S-diacylglycerol cysteine. The disordered stretch occupies residues 26-53 (TDSAPTTSPTTTSPTTSTTTTSATTSAQ). Over residues 28 to 52 (SAPTTSPTTTSPTTSTTTTSATTSA) the composition is skewed to low complexity.

As to quaternary structure, interacts with the periplasmic loop domains of the mycolate transporters MmpL3 and MmpL11. Also interacts with secreted cell envelope biosynthetic enzymes such as Ag85A. These interactions are weak and may require a putative mycobacterial adapter protein or molecule. Interacts with human ubiquitin ligase CBL.

It localises to the cell membrane. Its subcellular location is the secreted. Involved in cell envelope biogenesis. May act as a membrane fusion protein, connecting MmpL transporters with periplasmic proteins, and play a role in cell envelope lipid changes during biofilm maturation. Functionally, is also a virulence factor required for intracellular survival. Associates with CBL, a host ubiquitin ligase, and probably blocks the normal functions of CBL and disturbs CBL-mediated antibacterial activity. Interaction counteracts antibacterial defense but causes a reciprocal enhancement of antiviral defense. This chain is Lipoprotein LpqN, found in Mycobacterium tuberculosis (strain ATCC 25618 / H37Rv).